The chain runs to 269 residues: Putative phosphoenolpyruvate synthase regulatory protein (269 aa).

149–156 (GVSRSGKT) is an ADP binding site.

It belongs to the pyruvate, phosphate/water dikinase regulatory protein family. PSRP subfamily.

The catalysed reaction is [pyruvate, water dikinase] + ADP = [pyruvate, water dikinase]-phosphate + AMP + H(+). It carries out the reaction [pyruvate, water dikinase]-phosphate + phosphate + H(+) = [pyruvate, water dikinase] + diphosphate. In terms of biological role, bifunctional serine/threonine kinase and phosphorylase involved in the regulation of the phosphoenolpyruvate synthase (PEPS) by catalyzing its phosphorylation/dephosphorylation. This chain is Putative phosphoenolpyruvate synthase regulatory protein, found in Colwellia psychrerythraea (strain 34H / ATCC BAA-681) (Vibrio psychroerythus).